Reading from the N-terminus, the 728-residue chain is 1,4-alpha-glucan branching enzyme GlgB (728 aa).

Residue Asp405 is the Nucleophile of the active site. Glu458 acts as the Proton donor in catalysis.

It belongs to the glycosyl hydrolase 13 family. GlgB subfamily. Monomer.

It catalyses the reaction Transfers a segment of a (1-&gt;4)-alpha-D-glucan chain to a primary hydroxy group in a similar glucan chain.. It participates in glycan biosynthesis; glycogen biosynthesis. Catalyzes the formation of the alpha-1,6-glucosidic linkages in glycogen by scission of a 1,4-alpha-linked oligosaccharide from growing alpha-1,4-glucan chains and the subsequent attachment of the oligosaccharide to the alpha-1,6 position. This chain is 1,4-alpha-glucan branching enzyme GlgB, found in Escherichia coli O6:H1 (strain CFT073 / ATCC 700928 / UPEC).